A 1187-amino-acid chain; its full sequence is RNA helicase Mov10l1 (1187 aa).

Residues 273-347 form a disordered region; sequence RSKSCPGAAA…EPEPGGLIPP (75 aa). 2 stretches are compositionally biased toward basic and acidic residues: residues 296–307 and 322–339; these read HHREDKTDEIPE and ACKE…KQEP. 5 repeat units span residues 642 to 652, 653 to 663, 664 to 674, 675 to 685, and 686 to 696. Residues 642–696 are 5 X 11 AA tandem repeats of [TI]-R-N-[DN]-[GS]-Q-[SP]-I-T-[NK]-[IVN]; it reads TRNDSQSITNIIRNDGQSITNVTRNDGQPITKVTRNNSQSITNITRNDGQPITKN. The interval 686-727 is disordered; the sequence is TRNDGQPITKNKKTVKDQTKHTTEERHVGTTDQPEKASSTAE. Over residues 699–720 the composition is skewed to basic and acidic residues; it reads TVKDQTKHTTEERHVGTTDQPE. 772 to 779 provides a ligand contact to ATP; it reads GPPGTGKT. The DEAG box signature appears at 888–891; that stretch reads DEAG.

The protein belongs to the DNA2/NAM7 helicase family. SDE3 subfamily. In terms of assembly, interacts with PIWIL1. Interacts with PIWIL2. Interacts with PIWIL4. Interacts with HSPA2. Interacts with PLD6. As to expression, isoform 1: Specifically expressed in testis. Isoform 1: In testis, present in pachytene spermatocytes but absent in postmeiotic spermatids (at protein level). Isoform 2: Present in cardiomyocytes (at protein level). Isoform 2: Heart specific. Isoform 3: Heart specific and is specifically expressed in cardiac myocytes.

It localises to the cytoplasm. The enzyme catalyses ATP + H2O = ADP + phosphate + H(+). Functionally, ATP-dependent RNA helicase required during spermatogenesis to repress transposable elements and prevent their mobilization, which is essential for germline integrity. Acts via the piRNA metabolic process, which mediates the repression of transposable elements during meiosis by forming complexes composed of piRNAs and Piwi proteins and governs the methylation and subsequent repression of transposons. Involved in the primary piRNA metabolic process. Specifically binds to piRNA precursors and promotes the generation of intermediate piRNA processing fragments that are subsequently loaded to Piwi proteins. Acts via its ATP-dependent RNA helicase activity: displays 5'-3' RNA unwinding activity and probably mediates unwinding and funneling of single-stranded piRNA precursor transcripts to the endonuclease that catalyzes the first cleavage step of piRNA processing to generate piRNA intermediate fragments that are subsequently loaded to Piwi proteins. In terms of biological role, may act downstream of MEF2C during heart formation. Acts as a cardiac-specific suppressor of cardiomyocyte hypertrophy and cell cycle progression, suggesting that it may suppress these processes through the regulation of CDKN1A. Such results however require additional evidence. This Mus musculus (Mouse) protein is RNA helicase Mov10l1.